Reading from the N-terminus, the 101-residue chain is Small ribosomal subunit protein uS14 (101 aa).

The protein belongs to the universal ribosomal protein uS14 family. In terms of assembly, part of the 30S ribosomal subunit. Contacts proteins S3 and S10.

Binds 16S rRNA, required for the assembly of 30S particles and may also be responsible for determining the conformation of the 16S rRNA at the A site. The protein is Small ribosomal subunit protein uS14 of Nitrosospira multiformis (strain ATCC 25196 / NCIMB 11849 / C 71).